We begin with the raw amino-acid sequence, 928 residues long: Mating-type protein A-alpha Y4 (928 aa).

Positions glycine 152–leucine 211 form a DNA-binding region, homeobox. Disordered stretches follow at residues lysine 255–proline 296, aspartate 310–asparagine 329, threonine 340–proline 359, tyrosine 406–serine 451, and alanine 626–leucine 736. Residues glutamate 344 to proline 353 are compositionally biased toward basic residues. The segment covering lysine 635 to arginine 657 has biased composition (basic and acidic residues). Composition is skewed to low complexity over residues serine 668–arginine 682 and glutamate 694–glycine 728.

The protein resides in the nucleus. Its function is as follows. Specifies A-alpha-4 mating-type. May regulate the expression of genes specific to the homokaryotic cell type. The chain is Mating-type protein A-alpha Y4 from Schizophyllum commune (Split gill fungus).